The chain runs to 403 residues: Chorismate synthase (403 aa).

Arginine 40 and arginine 46 together coordinate NADP(+). FMN contacts are provided by residues 140-142 (RSS) and 261-262 (QA). Positions 277-298 (RRGSEAHDEMVRTDEGVDRETN) are enriched in basic and acidic residues. The disordered stretch occupies residues 277–307 (RRGSEAHDEMVRTDEGVDRETNRAGGLEGGM). Residues glycine 305, 320–324 (KPIST), and arginine 346 contribute to the FMN site.

This sequence belongs to the chorismate synthase family. Homotetramer. FMNH2 serves as cofactor.

The catalysed reaction is 5-O-(1-carboxyvinyl)-3-phosphoshikimate = chorismate + phosphate. Its pathway is metabolic intermediate biosynthesis; chorismate biosynthesis; chorismate from D-erythrose 4-phosphate and phosphoenolpyruvate: step 7/7. In terms of biological role, catalyzes the anti-1,4-elimination of the C-3 phosphate and the C-6 proR hydrogen from 5-enolpyruvylshikimate-3-phosphate (EPSP) to yield chorismate, which is the branch point compound that serves as the starting substrate for the three terminal pathways of aromatic amino acid biosynthesis. This reaction introduces a second double bond into the aromatic ring system. The protein is Chorismate synthase of Corynebacterium aurimucosum (strain ATCC 700975 / DSM 44827 / CIP 107346 / CN-1) (Corynebacterium nigricans).